A 124-amino-acid polypeptide reads, in one-letter code: Fluoride-specific ion channel FluC (124 aa).

4 helical membrane passes run 1–21 (MIGV…LRFA), 34–54 (FYAA…YLYG), 62–82 (VPLA…TTFS), and 101–121 (FSYL…GLIL). Residues Gly76 and Thr79 each contribute to the Na(+) site.

Belongs to the fluoride channel Fluc/FEX (TC 1.A.43) family.

It localises to the cell inner membrane. It catalyses the reaction fluoride(in) = fluoride(out). Its activity is regulated as follows. Na(+) is not transported, but it plays an essential structural role and its presence is essential for fluoride channel function. Functionally, fluoride-specific ion channel. Important for reducing fluoride concentration in the cell, thus reducing its toxicity. The polypeptide is Fluoride-specific ion channel FluC (Azotobacter vinelandii (strain DJ / ATCC BAA-1303)).